A 160-amino-acid chain; its full sequence is Protein Bel-3 (160 aa).

Homodimer.

It is found in the host cytoplasm. The sequence is that of Protein Bel-3 (bel3) from Human spumaretrovirus (SFVcpz(hu)).